The following is a 473-amino-acid chain: H(+)/Cl(-) exchange transporter ClcA (473 aa).

Residues Met1–Pro32 lie on the Cytoplasmic side of the membrane. Residues Leu33–Val69 traverse the membrane as a helical segment. The Periplasmic segment spans residues Gln70 to Phe76. A helical membrane pass occupies residues Leu77 to Phe100. A Selectivity filter part_1 motif is present at residues Gly106–Pro110. Chloride is bound at residue Ser107. An intramembrane region (helical) is located at residues Ile109–Leu116. The Cytoplasmic portion of the chain corresponds to Glu117 to Arg123. The next 2 helical transmembrane spans lie at Trp124–Ala141 and Glu148–Phe166. The Selectivity filter part_2 signature appears at Gly146–Pro150. Residues Arg167–Thr176 are Cytoplasmic-facing. 2 intramembrane regions (helical) span residues Leu177–Ala189 and Pro193–Ile201. Over Glu202–Ser214 the chain is Cytoplasmic. The helical transmembrane segment at Ile215–Phe232 threads the bilayer. At Asn233–Leu252 the chain is on the periplasmic side. A helical transmembrane segment spans residues Trp253 to Gln281. Topologically, residues Arg282–Glu287 are cytoplasmic. Residues Ile288–Glu309 form a helical membrane-spanning segment. Residues Pro310–Ser329 are Periplasmic-facing. 2 consecutive transmembrane segments (helical) span residues Val330–Ser349 and Gly355–Ala376. The Selectivity filter part_3 motif lies at Gly355 to Pro359. Residues Ile356 and Phe357 each contribute to the chloride site. The Periplasmic portion of the chain corresponds to Val377–Ala386. The segment at residues Gly387–Ser401 is an intramembrane region (helical). Positions Val402–Ala404 form an intramembrane region, note=Loop between two helices. Positions Pro405–Thr416 form an intramembrane region, helical. The note=Loop between two helices intramembrane region spans Asp417–Leu421. A helical membrane pass occupies residues Ile422 to Phe438. The Cytoplasmic segment spans residues Leu439–Thr473. Tyr445 contacts chloride.

The protein belongs to the chloride channel (TC 2.A.49) family. ClcA subfamily. As to quaternary structure, homodimer.

The protein localises to the cell inner membrane. It carries out the reaction 2 chloride(in) + H(+)(out) = 2 chloride(out) + H(+)(in). Functionally, proton-coupled chloride transporter. Functions as antiport system and exchanges two chloride ions for 1 proton. Probably acts as an electrical shunt for an outwardly-directed proton pump that is linked to amino acid decarboxylation, as part of the extreme acid resistance (XAR) response. The protein is H(+)/Cl(-) exchange transporter ClcA of Salmonella arizonae (strain ATCC BAA-731 / CDC346-86 / RSK2980).